Here is a 542-residue protein sequence, read N- to C-terminus: CTP synthase (542 aa).

The amidoligase domain stretch occupies residues 1-265; that stretch reads MARYVFITGG…DDEVLAAFGI (265 aa). Residue serine 13 coordinates CTP. Serine 13 contacts UTP. ATP-binding positions include 14–19 and aspartate 71; that span reads SLGKGI. Residues aspartate 71 and glutamate 139 each coordinate Mg(2+). CTP-binding positions include 146–148, 186–191, and lysine 222; these read DIE and KTKPTQ. Residues 186 to 191 and lysine 222 each bind UTP; that span reads KTKPTQ. The Glutamine amidotransferase type-1 domain occupies 291–541; the sequence is TIAIVGKYTG…IEAATEQSRL (251 aa). Glycine 353 is a binding site for L-glutamine. Catalysis depends on cysteine 380, which acts as the Nucleophile; for glutamine hydrolysis. L-glutamine is bound by residues 381–384, glutamate 404, and arginine 469; that span reads FGMQ. Residues histidine 514 and glutamate 516 contribute to the active site.

This sequence belongs to the CTP synthase family. Homotetramer.

It catalyses the reaction UTP + L-glutamine + ATP + H2O = CTP + L-glutamate + ADP + phosphate + 2 H(+). The catalysed reaction is L-glutamine + H2O = L-glutamate + NH4(+). It carries out the reaction UTP + NH4(+) + ATP = CTP + ADP + phosphate + 2 H(+). Its pathway is pyrimidine metabolism; CTP biosynthesis via de novo pathway; CTP from UDP: step 2/2. Its activity is regulated as follows. Allosterically activated by GTP, when glutamine is the substrate; GTP has no effect on the reaction when ammonia is the substrate. The allosteric effector GTP functions by stabilizing the protein conformation that binds the tetrahedral intermediate(s) formed during glutamine hydrolysis. Inhibited by the product CTP, via allosteric rather than competitive inhibition. Catalyzes the ATP-dependent amination of UTP to CTP with either L-glutamine or ammonia as the source of nitrogen. Regulates intracellular CTP levels through interactions with the four ribonucleotide triphosphates. This chain is CTP synthase, found in Rhizobium leguminosarum bv. trifolii (strain WSM2304).